Here is a 676-residue protein sequence, read N- to C-terminus: DNA ligase (676 aa).

NAD(+) is bound by residues 34–38, 84–85, and glutamate 116; these read DAEYD and SL. The N6-AMP-lysine intermediate role is filled by lysine 118. NAD(+) is bound by residues arginine 139, glutamate 174, lysine 294, and lysine 318. Residues cysteine 412, cysteine 415, cysteine 428, and cysteine 433 each coordinate Zn(2+). The region spanning 589–676 is the BRCT domain; the sequence is KGGEALKGLT…RTGKKAEELV (88 aa).

Belongs to the NAD-dependent DNA ligase family. LigA subfamily. The cofactor is Mg(2+). It depends on Mn(2+) as a cofactor.

The catalysed reaction is NAD(+) + (deoxyribonucleotide)n-3'-hydroxyl + 5'-phospho-(deoxyribonucleotide)m = (deoxyribonucleotide)n+m + AMP + beta-nicotinamide D-nucleotide.. DNA ligase that catalyzes the formation of phosphodiester linkages between 5'-phosphoryl and 3'-hydroxyl groups in double-stranded DNA using NAD as a coenzyme and as the energy source for the reaction. It is essential for DNA replication and repair of damaged DNA. This Thermus thermophilus (strain ATCC BAA-163 / DSM 7039 / HB27) protein is DNA ligase.